Here is an 856-residue protein sequence, read N- to C-terminus: MREMGTGDSASRLILWFCLGFLILGVGFVQCGVTYDRKALLINGQRRILFSGSIHYPRSTPDMWEDLIQKAKDGGIDVIETYVFWNLHEPSPGKYDFEGRNDLVRFVKTIHKAGLYAHLRIGPYVCAEWNFGGFPVWLKYVPGISFRTDNEPFKRAMKGFTERIVELMKSENLFESQGGPIILSQIENEYGRQGQLLGAEGHNYMTWAAKMAIATETGVPWVMCKEDDAPDPVINTCNGFYCDSFAPNKPYKPLIWTEAWSGWFTEFGGPMHHRPVQDLAFGVARFIQKGGSFVNYYMYHGGTNFGRTAGGPFVTTSYDYDAPIDEYGLIRQPKYGHLKELHRAIKMCEKALVSADPVVTSIGNKQQAHVYSAESGDCSAFLANYDTESAARVLFNNVHYNLPPWSISILPDCRNAVFNTAKVGVQTSQMEMLPTDTKNFQWESYLEDLSSLDDSSTFTTHGLLEQINVTRDTSDYLWYMTSVDIGDSESFLHGGELPTLIIQSTGHAVHIFVNGQLSGSAFGTRQNRRFTYQGKINLHSGTNRIALLSVAVGLPNVGGHFESWNTGILGPVALHGLSQGKMDLSWQKWTYQVGLKGEAMNLAFPTNTPSIGWMDASLTVQKPQPLTWHKTYFDAPEGNEPLALDMEGMGKGQIWVNGESIGRYWTAFATGDCSHCSYTGTYKPNKCQTGCGQPTQRWYHVPRAWLKPSQNLLVIFEELGGNPSTVSLVKRSVSGVCAEVSEYHPNIKNWQIESYGKGQTFHRPKVHLKCSPGQAIASIKFASFGTPLGTCGSYQQGECHAATSYAILERKCVGKARCAVTISNSNFGKDPCPNVLKRLTVEAVCAPETSVSTWRP.

Positions 1 to 31 (MREMGTGDSASRLILWFCLGFLILGVGFVQC) are cleaved as a signal peptide. Glu189 functions as the Proton donor in the catalytic mechanism. Glu258 acts as the Nucleophile in catalysis. Asn468 carries N-linked (GlcNAc...) asparagine glycosylation. The SUEL-type lectin domain maps to 760 to 846 (TFHRPKVHLK…KRLTVEAVCA (87 aa)).

It belongs to the glycosyl hydrolase 35 family. In terms of tissue distribution, ubiquitous.

It is found in the secreted. Its subcellular location is the extracellular space. The protein resides in the apoplast. It carries out the reaction Hydrolysis of terminal non-reducing beta-D-galactose residues in beta-D-galactosides.. The chain is Beta-galactosidase 3 (BGAL3) from Arabidopsis thaliana (Mouse-ear cress).